The primary structure comprises 113 residues: MAKIKKDDLVQVISGKDKGKQGKVLRVFPTDERVLVEGVNRVTKHLRAGQDNNGSTEGGLQVVEAPIHISNVAVVDPETKKPTRVGYRFETVEKDGVSKTVKVRFAKASGKEL.

This sequence belongs to the universal ribosomal protein uL24 family. As to quaternary structure, part of the 50S ribosomal subunit.

In terms of biological role, one of two assembly initiator proteins, it binds directly to the 5'-end of the 23S rRNA, where it nucleates assembly of the 50S subunit. One of the proteins that surrounds the polypeptide exit tunnel on the outside of the subunit. This chain is Large ribosomal subunit protein uL24, found in Micrococcus luteus (strain ATCC 4698 / DSM 20030 / JCM 1464 / CCM 169 / CCUG 5858 / IAM 1056 / NBRC 3333 / NCIMB 9278 / NCTC 2665 / VKM Ac-2230) (Micrococcus lysodeikticus).